The following is a 448-amino-acid chain: Adenylosuccinate synthetase (448 aa).

Residues G22–K28 and G50–T52 contribute to the GTP site. The Proton acceptor role is filled by D23. Mg(2+) contacts are provided by D23 and G50. Residues D23–K26, N48–H51, T139, R153, Q234, T249, and R321 each bind IMP. The Proton donor role is filled by H51. S317–R323 provides a ligand contact to substrate. GTP-binding positions include R323, K349–D351, and S431–G433.

The protein belongs to the adenylosuccinate synthetase family. In terms of assembly, homodimer. It depends on Mg(2+) as a cofactor.

The protein resides in the cytoplasm. The enzyme catalyses IMP + L-aspartate + GTP = N(6)-(1,2-dicarboxyethyl)-AMP + GDP + phosphate + 2 H(+). It participates in purine metabolism; AMP biosynthesis via de novo pathway; AMP from IMP: step 1/2. Its function is as follows. Plays an important role in the de novo pathway of purine nucleotide biosynthesis. Catalyzes the first committed step in the biosynthesis of AMP from IMP. This chain is Adenylosuccinate synthetase, found in Burkholderia pseudomallei (strain 1106a).